Reading from the N-terminus, the 181-residue chain is Cell division protein SepF (181 aa).

The segment covering 18–27 (EDYLDDDDYD) has biased composition (acidic residues). Residues 18–42 (EDYLDDDDYDDGRAVGHDDRRAMHE) are disordered. The span at 28 to 42 (DGRAVGHDDRRAMHE) shows a compositional bias: basic and acidic residues.

Belongs to the SepF family. In terms of assembly, homodimer. Interacts with FtsZ.

It localises to the cytoplasm. In terms of biological role, cell division protein that is part of the divisome complex and is recruited early to the Z-ring. Probably stimulates Z-ring formation, perhaps through the cross-linking of FtsZ protofilaments. Its function overlaps with FtsA. In Frankia alni (strain DSM 45986 / CECT 9034 / ACN14a), this protein is Cell division protein SepF.